Consider the following 419-residue polypeptide: UDP-N-acetylglucosamine 1-carboxyvinyltransferase 2 (419 aa).

22–23 (KN) contributes to the phosphoenolpyruvate binding site. Arg92 contributes to the UDP-N-acetyl-alpha-D-glucosamine binding site. The active-site Proton donor is Asp116. UDP-N-acetyl-alpha-D-glucosamine is bound by residues 121–125 (RPIDQ), Asp306, and Leu328.

This sequence belongs to the EPSP synthase family. MurA subfamily.

The protein localises to the cytoplasm. The catalysed reaction is phosphoenolpyruvate + UDP-N-acetyl-alpha-D-glucosamine = UDP-N-acetyl-3-O-(1-carboxyvinyl)-alpha-D-glucosamine + phosphate. The protein operates within cell wall biogenesis; peptidoglycan biosynthesis. Cell wall formation. Adds enolpyruvyl to UDP-N-acetylglucosamine. The polypeptide is UDP-N-acetylglucosamine 1-carboxyvinyltransferase 2 (Latilactobacillus sakei subsp. sakei (strain 23K) (Lactobacillus sakei subsp. sakei)).